The chain runs to 358 residues: Phospho-N-acetylmuramoyl-pentapeptide-transferase (358 aa).

10 helical membrane passes run 26 to 46 (TIYA…WIIR), 71 to 91 (TPTM…LLWA), 93 to 113 (LTNV…LIGF), 134 to 154 (MFWQ…TPGF), 170 to 190 (LGIF…NAVN), 197 to 217 (GLAI…AYVA), 234 to 254 (AGEL…FLWF), 261 to 281 (VFMG…IAVL), 286 to 306 (ILLV…IFQV), and 335 to 355 (KIIV…ISTL).

The protein belongs to the glycosyltransferase 4 family. MraY subfamily. The cofactor is Mg(2+).

It is found in the cell inner membrane. It carries out the reaction UDP-N-acetyl-alpha-D-muramoyl-L-alanyl-gamma-D-glutamyl-meso-2,6-diaminopimeloyl-D-alanyl-D-alanine + di-trans,octa-cis-undecaprenyl phosphate = di-trans,octa-cis-undecaprenyl diphospho-N-acetyl-alpha-D-muramoyl-L-alanyl-D-glutamyl-meso-2,6-diaminopimeloyl-D-alanyl-D-alanine + UMP. It participates in cell wall biogenesis; peptidoglycan biosynthesis. Functionally, catalyzes the initial step of the lipid cycle reactions in the biosynthesis of the cell wall peptidoglycan: transfers peptidoglycan precursor phospho-MurNAc-pentapeptide from UDP-MurNAc-pentapeptide onto the lipid carrier undecaprenyl phosphate, yielding undecaprenyl-pyrophosphoryl-MurNAc-pentapeptide, known as lipid I. This chain is Phospho-N-acetylmuramoyl-pentapeptide-transferase, found in Trichlorobacter lovleyi (strain ATCC BAA-1151 / DSM 17278 / SZ) (Geobacter lovleyi).